The primary structure comprises 65 residues: Metallothionein-like protein 3B (65 aa).

Belongs to the metallothionein superfamily. Type 15 family. As to expression, expressed in leaves and rachis.

Its function is as follows. Metallothioneins have a high content of cysteine residues that bind various heavy metals. This Oryza sativa subsp. japonica (Rice) protein is Metallothionein-like protein 3B (MT3B).